A 346-amino-acid polypeptide reads, in one-letter code: Glycosyltransferase 1 domain-containing protein 1 (346 aa).

An N-terminal signal peptide occupies residues 1–16; it reads MRLLFLAVLRPHTGNA.

It belongs to the glycosyltransferase group 1 family. Glycosyltransferase 4 subfamily.

It is found in the secreted. In Homo sapiens (Human), this protein is Glycosyltransferase 1 domain-containing protein 1 (GLT1D1).